A 574-amino-acid polypeptide reads, in one-letter code: Sulfate adenylyltransferase (574 aa).

Residues 1–169 are N-terminal; the sequence is MANTPHGGVL…LEAVNKLNHY (169 aa). The tract at residues 170–394 is catalytic; it reads DYVGLRYTPA…LRESSPPRAL (225 aa). Residue Gln197 coordinates sulfate. ATP is bound by residues 197–200 and 291–294; these read QTRN and GRDH. Active-site residues include Thr198, Arg199, and Asn200. Arg199 contributes to the sulfate binding site. Ala295 provides a ligand contact to sulfate. Residue Val333 participates in ATP binding. Residues 395-574 are allosteric regulation domain; adenylyl-sulfate kinase-like; the sequence is QGFTIFLTGY…LESEGYFERL (180 aa). 3'-phosphoadenylyl sulfate-binding positions include 434–437, Arg451, 477–478, and Arg516; these read DTVR and IA.

This sequence in the N-terminal section; belongs to the sulfate adenylyltransferase family. The protein in the C-terminal section; belongs to the APS kinase family. In terms of assembly, homohexamer. Dimer of trimers.

It is found in the cytoplasm. The enzyme catalyses sulfate + ATP + H(+) = adenosine 5'-phosphosulfate + diphosphate. Its pathway is sulfur metabolism; hydrogen sulfide biosynthesis; sulfite from sulfate: step 1/3. With respect to regulation, allosterically inhibited by 3'-phosphoadenosine 5'-phosphosulfate (PAPS). Catalyzes the first intracellular reaction of sulfate assimilation, forming adenosine-5'-phosphosulfate (APS) from inorganic sulfate and ATP. Plays an important role in sulfate activation as a component of the biosynthesis pathway of sulfur-containing amino acids. This is Sulfate adenylyltransferase from Emericella nidulans (strain FGSC A4 / ATCC 38163 / CBS 112.46 / NRRL 194 / M139) (Aspergillus nidulans).